We begin with the raw amino-acid sequence, 880 residues long: DNA mismatch repair protein MutS (880 aa).

Residue 635–642 (GPNMGGKS) participates in ATP binding.

The protein belongs to the DNA mismatch repair MutS family.

This protein is involved in the repair of mismatches in DNA. It is possible that it carries out the mismatch recognition step. This protein has a weak ATPase activity. This chain is DNA mismatch repair protein MutS, found in Nitrosomonas eutropha (strain DSM 101675 / C91 / Nm57).